The sequence spans 188 residues: Protein K (188 aa).

The protein is Protein K (K) of Escherichia coli.